The chain runs to 1517 residues: uncharacterized protein (1517 aa).

Polar residues predominate over residues 1-13; the sequence is MNQFPNQPGNFGQ. A disordered region spans residues 1–26; the sequence is MNQFPNQPGNFGQNYYKPVQGSIPAN. N-linked (GlcNAc...) asparagine glycans are attached at residues asparagine 35, asparagine 40, and asparagine 76. The next 5 helical transmembrane spans lie at 231–251, 397–417, 510–530, 612–632, and 720–740; these read AIDF…AVPI, AIGL…TVWC, FVPL…KDWI, PNIV…FFAL, and VFDC…VVLL. N-linked (GlcNAc...) asparagine glycosylation occurs at asparagine 917. 4 consecutive transmembrane segments (helical) span residues 956–976, 985–1005, 1051–1071, and 1114–1134; these read FVYA…VPPL, VPAF…VNSE, VKLD…AFWS, and GIGF…TYLL. An N-linked (GlcNAc...) asparagine glycan is attached at asparagine 1178. The chain crosses the membrane as a helical span at residues 1261 to 1281; it reads PYALPLLDSGMVPVSTQLAIV. Residue asparagine 1321 is glycosylated (N-linked (GlcNAc...) asparagine). 2 consecutive transmembrane segments (helical) span residues 1353 to 1373 and 1408 to 1428; these read APVV…TFEV and VVVV…PVVI.

To S.pombe SpAC22F3.04.

The protein resides in the membrane. This is an uncharacterized protein from Schizosaccharomyces pombe (strain 972 / ATCC 24843) (Fission yeast).